The sequence spans 160 residues: 6,7-dimethyl-8-ribityllumazine synthase (160 aa).

Residues Phe22, 57 to 59 (AVE), and 81 to 83 (AVI) contribute to the 5-amino-6-(D-ribitylamino)uracil site. 86 to 87 (GT) serves as a coordination point for (2S)-2-hydroxy-3-oxobutyl phosphate. His89 serves as the catalytic Proton donor. Phe114 is a 5-amino-6-(D-ribitylamino)uracil binding site. Arg128 is a (2S)-2-hydroxy-3-oxobutyl phosphate binding site.

This sequence belongs to the DMRL synthase family. As to quaternary structure, forms an icosahedral capsid composed of 60 subunits, arranged as a dodecamer of pentamers.

The enzyme catalyses (2S)-2-hydroxy-3-oxobutyl phosphate + 5-amino-6-(D-ribitylamino)uracil = 6,7-dimethyl-8-(1-D-ribityl)lumazine + phosphate + 2 H2O + H(+). Its pathway is cofactor biosynthesis; riboflavin biosynthesis; riboflavin from 2-hydroxy-3-oxobutyl phosphate and 5-amino-6-(D-ribitylamino)uracil: step 1/2. Catalyzes the formation of 6,7-dimethyl-8-ribityllumazine by condensation of 5-amino-6-(D-ribitylamino)uracil with 3,4-dihydroxy-2-butanone 4-phosphate. This is the penultimate step in the biosynthesis of riboflavin. The protein is 6,7-dimethyl-8-ribityllumazine synthase of Shewanella sediminis (strain HAW-EB3).